We begin with the raw amino-acid sequence, 839 residues long: Protein translocase subunit SecA (839 aa).

Residues Q85, 103–107, and D492 contribute to the ATP site; that span reads GEGKT. The tract at residues 794–820 is disordered; that stretch reads EINYSGPDAGDTKKEPVRRKEKKIGRN. Residues C823, C825, C834, and C835 each contribute to the Zn(2+) site.

It belongs to the SecA family. In terms of assembly, monomer and homodimer. Part of the essential Sec protein translocation apparatus which comprises SecA, SecYEG and auxiliary proteins SecDF. Other proteins may also be involved. It depends on Zn(2+) as a cofactor.

The protein localises to the cell membrane. It is found in the cytoplasm. It carries out the reaction ATP + H2O + cellular proteinSide 1 = ADP + phosphate + cellular proteinSide 2.. Its function is as follows. Part of the Sec protein translocase complex. Interacts with the SecYEG preprotein conducting channel. Has a central role in coupling the hydrolysis of ATP to the transfer of proteins into and across the cell membrane, serving as an ATP-driven molecular motor driving the stepwise translocation of polypeptide chains across the membrane. The chain is Protein translocase subunit SecA from Clostridium acetobutylicum (strain ATCC 824 / DSM 792 / JCM 1419 / IAM 19013 / LMG 5710 / NBRC 13948 / NRRL B-527 / VKM B-1787 / 2291 / W).